The sequence spans 127 residues: Flagellar assembly factor FliW (127 aa).

It belongs to the FliW family. Interacts with translational regulator CsrA and flagellin(s).

The protein resides in the cytoplasm. Functionally, acts as an anti-CsrA protein, binds CsrA and prevents it from repressing translation of its target genes, one of which is flagellin. Binds to flagellin and participates in the assembly of the flagellum. In Campylobacter concisus (strain 13826), this protein is Flagellar assembly factor FliW.